We begin with the raw amino-acid sequence, 277 residues long: Large ribosomal subunit protein uL2c (277 aa).

The interval 224–257 (VMNPIDHPHGGGEGRAPIGRKKPLTPWGHPALGR) is disordered.

It belongs to the universal ribosomal protein uL2 family. Part of the 50S ribosomal subunit.

It localises to the plastid. The protein localises to the chloroplast. The protein is Large ribosomal subunit protein uL2c (rpl2) of Anthoceros angustus (Hornwort).